The sequence spans 510 residues: uncharacterized protein (510 aa).

4 disordered regions span residues 1 to 154 (MGSP…ATFL), 208 to 227 (DGNH…GDLA), 234 to 276 (TRES…QGIL), and 368 to 480 (NFYT…GCPR). Serine 43 is modified (phosphoserine). A compositionally biased stretch (polar residues) spans 50 to 60 (PLVSQQDTSEA). Residues 78–92 (EEERLGSPEDEKMDG) show a composition bias toward basic and acidic residues. The residue at position 84 (serine 84) is a Phosphoserine. Composition is skewed to polar residues over residues 97 to 109 (SQPS…QVAN) and 118 to 135 (QPSS…SNRR). Phosphoserine is present on serine 120. The segment covering 139 to 151 (ASGSEEAKAASAA) has biased composition (low complexity). A compositionally biased stretch (low complexity) spans 243-255 (SSLLTTTRGLTSG). Positions 379–395 (RTKELQLVAKEDTDSTR) are enriched in basic and acidic residues. The span at 414-441 (SVHQEFSSGDINTRSLQDPGNSQSSGLS) shows a compositional bias: polar residues.

This is an uncharacterized protein from Rattus norvegicus (Rat).